We begin with the raw amino-acid sequence, 160 residues long: Cyclic pyranopterin monophosphate synthase (160 aa).

Residues 74-76 (LSH) and 112-113 (ME) contribute to the substrate site. Aspartate 127 is a catalytic residue.

The protein belongs to the MoaC family. Homohexamer; trimer of dimers.

The enzyme catalyses (8S)-3',8-cyclo-7,8-dihydroguanosine 5'-triphosphate = cyclic pyranopterin phosphate + diphosphate. The protein operates within cofactor biosynthesis; molybdopterin biosynthesis. Functionally, catalyzes the conversion of (8S)-3',8-cyclo-7,8-dihydroguanosine 5'-triphosphate to cyclic pyranopterin monophosphate (cPMP). The protein is Cyclic pyranopterin monophosphate synthase of Trichlorobacter lovleyi (strain ATCC BAA-1151 / DSM 17278 / SZ) (Geobacter lovleyi).